The following is a 131-amino-acid chain: Small ribosomal subunit protein uS8 (131 aa).

It belongs to the universal ribosomal protein uS8 family. Part of the 30S ribosomal subunit. Contacts proteins S5 and S12.

Its function is as follows. One of the primary rRNA binding proteins, it binds directly to 16S rRNA central domain where it helps coordinate assembly of the platform of the 30S subunit. The protein is Small ribosomal subunit protein uS8 of Paracidovorax citrulli (strain AAC00-1) (Acidovorax citrulli).